The sequence spans 444 residues: Ribosomal protein uS12 methylthiotransferase RimO (444 aa).

The MTTase N-terminal domain occupies 2–118; it reads LKIALESLGC…IDKILKELSE (117 aa). Residues Cys-11, Cys-47, Cys-81, Cys-155, Cys-159, and Cys-162 each contribute to the [4Fe-4S] cluster site. The Radical SAM core domain occupies 141-371; sequence STPSYMAYLK…MMIQQKISEE (231 aa). The TRAM domain occupies 374 to 441; it reads DKKIGKTYEV…EYDLMGDVLY (68 aa).

The protein belongs to the methylthiotransferase family. RimO subfamily. The cofactor is [4Fe-4S] cluster.

It localises to the cytoplasm. It catalyses the reaction L-aspartate(89)-[ribosomal protein uS12]-hydrogen + (sulfur carrier)-SH + AH2 + 2 S-adenosyl-L-methionine = 3-methylsulfanyl-L-aspartate(89)-[ribosomal protein uS12]-hydrogen + (sulfur carrier)-H + 5'-deoxyadenosine + L-methionine + A + S-adenosyl-L-homocysteine + 2 H(+). Functionally, catalyzes the methylthiolation of an aspartic acid residue of ribosomal protein uS12. The sequence is that of Ribosomal protein uS12 methylthiotransferase RimO from Clostridioides difficile (strain 630) (Peptoclostridium difficile).